The following is a 523-amino-acid chain: F-box only protein 31-B (523 aa).

The 47-residue stretch at proline 59–arginine 105 folds into the F-box domain. The Zn(2+) site is built by cysteine 201, histidine 209, cysteine 225, and histidine 231. The segment at isoleucine 372–valine 427 is disordered. Basic and acidic residues-rich tracts occupy residues glycine 386 to histidine 396 and proline 406 to lysine 423.

The protein belongs to the FBXO31 family. In terms of assembly, part of a SCF (SKP1-cullin-F-box) protein ligase complex SCF(FBXO31).

It localises to the cytoplasm. Its pathway is protein modification; protein ubiquitination. Functionally, substrate-recognition component of the SCF(FBXO31) protein ligase complex, which specifically mediates the ubiquitination of proteins amidated at their C-terminus in response to oxidative stress, leading to their degradation by the proteasome. Fbxo31 specifically recognizes and binds C-terminal peptides bearing an amide: C-terminal amidation in response to oxidative stress takes place following protein fragmentation. The SCF(FBXO31) also plays a role in G1 arrest following DNA damage by mediating ubiquitination of phosphorylated cyclin-D1 (ccnd1), promoting its degradation by the proteasome, resulting in G1 arrest. The SCF(FBXO31) complex is however not a major regulator of ccnd1 stability during the G1/S transition. This Xenopus laevis (African clawed frog) protein is F-box only protein 31-B (fbxo31-b).